The following is a 518-amino-acid chain: Protein nucleotidyltransferase YdiU (518 aa).

Positions 1–10 (MTHLQFDNRL) are enriched in basic and acidic residues. The segment at 1–23 (MTHLQFDNRLRAQLPGDPEQGPR) is disordered. ATP-binding residues include Gly-100, Gly-102, Arg-103, Lys-123, Asp-135, Gly-136, Arg-193, and Arg-200. Asp-270 serves as the catalytic Proton acceptor. Positions 271 and 280 each coordinate Mg(2+). Residue Asp-280 coordinates ATP.

This sequence belongs to the SELO family. The cofactor is Mg(2+). Mn(2+) is required as a cofactor.

The enzyme catalyses L-seryl-[protein] + ATP = 3-O-(5'-adenylyl)-L-seryl-[protein] + diphosphate. The catalysed reaction is L-threonyl-[protein] + ATP = 3-O-(5'-adenylyl)-L-threonyl-[protein] + diphosphate. It catalyses the reaction L-tyrosyl-[protein] + ATP = O-(5'-adenylyl)-L-tyrosyl-[protein] + diphosphate. It carries out the reaction L-histidyl-[protein] + UTP = N(tele)-(5'-uridylyl)-L-histidyl-[protein] + diphosphate. The enzyme catalyses L-seryl-[protein] + UTP = O-(5'-uridylyl)-L-seryl-[protein] + diphosphate. The catalysed reaction is L-tyrosyl-[protein] + UTP = O-(5'-uridylyl)-L-tyrosyl-[protein] + diphosphate. In terms of biological role, nucleotidyltransferase involved in the post-translational modification of proteins. It can catalyze the addition of adenosine monophosphate (AMP) or uridine monophosphate (UMP) to a protein, resulting in modifications known as AMPylation and UMPylation. In Xanthomonas campestris pv. campestris (strain B100), this protein is Protein nucleotidyltransferase YdiU.